The chain runs to 680 residues: GTPase Obg (680 aa).

An Obg domain is found at 2–160; sequence DQFIDVVSFE…LNIRLEVKLI (159 aa). Positions 161–336 constitute an OBG-type G domain; it reads ADIGLVGMPN…LDGDMLDKVT (176 aa). Residues 167-174, 192-196, 214-217, 281-284, and 317-319 each bind GTP; these read GMPNTGKS, FTTLT, DIPG, NKTD, and PEI. Residues S174 and T194 each contribute to the Mg(2+) site. A radical SAM domain region spans residues 371–680; it reads TKRVFGPVVS…NGVLSYAVNI (310 aa). In terms of domain architecture, Radical SAM core spans 383–613; it reads LGNSLGIDVI…IEIDVPSVSD (231 aa). C397, C401, and C404 together coordinate [4Fe-4S] cluster.

Belongs to the TRAFAC class OBG-HflX-like GTPase superfamily. OBG GTPase family. In terms of assembly, monomer. Mg(2+) is required as a cofactor. The cofactor is [4Fe-4S] cluster.

It localises to the cytoplasm. An essential GTPase which binds GTP, GDP and possibly (p)ppGpp with moderate affinity, with high nucleotide exchange rates and a fairly low GTP hydrolysis rate. Plays a role in control of the cell cycle, stress response, ribosome biogenesis and in those bacteria that undergo differentiation, in morphogenesis control. The sequence is that of GTPase Obg from Brachyspira hyodysenteriae (strain ATCC 49526 / WA1).